Reading from the N-terminus, the 22-residue chain is Fuctinin-2 (22 aa).

The interval 1 to 22 (ELPGLPKGEKEQQEAIEHIDEV) is disordered. Residues 7 to 22 (KGEKEQQEAIEHIDEV) are compositionally biased toward basic and acidic residues.

The protein to human SET/PHAPII protein. As to quaternary structure, oligomer.

Its subcellular location is the cytoplasm. Has a role in the physiological regulation of fucosylation processes. This Rattus norvegicus (Rat) protein is Fuctinin-2.